The primary structure comprises 461 residues: Mycosin-3 (461 aa).

Residues 1 to 25 (MIRAAFACLAATVVVAGWWTPPAWA) form the signal peptide. The 334-residue stretch at 64–397 (DPGVPTPSQT…AGNLDAVAAL (334 aa)) folds into the Peptidase S8 domain. Catalysis depends on charge relay system residues aspartate 95, histidine 126, and serine 342. The chain crosses the membrane as a helical span at residues 432 to 452 (AFAGAAALSVLVGLTAATVAI).

The protein belongs to the peptidase S8 family.

It localises to the cell membrane. This Mycobacterium tuberculosis (strain ATCC 25618 / H37Rv) protein is Mycosin-3.